Consider the following 195-residue polypeptide: Putative EGF-like and EMI domain-containing protein 1 (195 aa).

Positions 86–97 (CTCKSGYQGNRC) constitute an EGF-like domain.

The sequence is that of Putative EGF-like and EMI domain-containing protein 1 (EGFEM1P) from Homo sapiens (Human).